A 372-amino-acid polypeptide reads, in one-letter code: GDSL esterase/lipase At5g45910 (372 aa).

The signal sequence occupies residues 1 to 19 (MRINMLFIVAFSFLVSVRS). Ser37 serves as the catalytic Nucleophile. 3 N-linked (GlcNAc...) asparagine glycosylation sites follow: Asn66, Asn101, and Asn137. Catalysis depends on residues Asp345 and His348.

The protein belongs to the 'GDSL' lipolytic enzyme family.

It localises to the secreted. This chain is GDSL esterase/lipase At5g45910, found in Arabidopsis thaliana (Mouse-ear cress).